Consider the following 315-residue polypeptide: Protein TIFY 4B (315 aa).

Positions 113–145 (CHRRDSPRSAEFSGSSGQFVADKDSHKTVSVSP) are disordered. The 36-residue stretch at 151-186 (TNAVVGQMTIFYSGKVNVYDGVPPEKARSIMHFAAN) folds into the Tify domain. The short motif at 233-260 (QANRKVSLQRYLEKRKDRRFSKTKKAPG) is the Jas element. A Nuclear localization signal motif is present at residues 235–242 (NRKVSLQR). The segment covering 248-257 (KDRRFSKTKK) has biased composition (basic residues). Residues 248-315 (KDRRFSKTKK…LNSDLNSEDN (68 aa)) are disordered. The segment covering 293-315 (PENQTKSPNISVDLNSDLNSEDN) has biased composition (polar residues).

It belongs to the TIFY/JAZ family. Interacts with AFPH2/NINJA.

It is found in the nucleus. Functionally, regulates the arrest of dispersed meristematic cells during lamina development. The protein is Protein TIFY 4B (TIFY4B) of Arabidopsis thaliana (Mouse-ear cress).